A 650-amino-acid chain; its full sequence is Probable acyl-CoA dehydrogenase FadE10 (650 aa).

The interval M1 to G23 is disordered. The segment covering E10–G23 has biased composition (basic and acidic residues). The Proton acceptor role is filled by E422.

It belongs to the acyl-CoA dehydrogenase family. It depends on FAD as a cofactor.

The catalysed reaction is a 2,3-saturated acyl-CoA + A = a 2,3-dehydroacyl-CoA + AH2. In Mycobacterium tuberculosis (strain CDC 1551 / Oshkosh), this protein is Probable acyl-CoA dehydrogenase FadE10 (fadE10).